A 228-amino-acid polypeptide reads, in one-letter code: Thymidylate kinase (228 aa).

The segment covering methionine 1–serine 10 has biased composition (polar residues). Positions methionine 1–glycine 23 are disordered. An ATP-binding site is contributed by glycine 20–serine 27.

This sequence belongs to the thymidylate kinase family.

It catalyses the reaction dTMP + ATP = dTDP + ADP. Its function is as follows. Phosphorylation of dTMP to form dTDP in both de novo and salvage pathways of dTTP synthesis. This is Thymidylate kinase from Bradyrhizobium diazoefficiens (strain JCM 10833 / BCRC 13528 / IAM 13628 / NBRC 14792 / USDA 110).